Consider the following 310-residue polypeptide: Methionyl-tRNA formyltransferase (310 aa).

Residue S109 to P112 coordinates (6S)-5,6,7,8-tetrahydrofolate.

It belongs to the Fmt family.

It carries out the reaction L-methionyl-tRNA(fMet) + (6R)-10-formyltetrahydrofolate = N-formyl-L-methionyl-tRNA(fMet) + (6S)-5,6,7,8-tetrahydrofolate + H(+). Attaches a formyl group to the free amino group of methionyl-tRNA(fMet). The formyl group appears to play a dual role in the initiator identity of N-formylmethionyl-tRNA by promoting its recognition by IF2 and preventing the misappropriation of this tRNA by the elongation apparatus. The protein is Methionyl-tRNA formyltransferase of Pseudomonas putida (strain W619).